The primary structure comprises 185 residues: Elongation factor P (185 aa).

The protein belongs to the elongation factor P family.

Its subcellular location is the cytoplasm. The protein operates within protein biosynthesis; polypeptide chain elongation. Its function is as follows. Involved in peptide bond synthesis. Stimulates efficient translation and peptide-bond synthesis on native or reconstituted 70S ribosomes in vitro. Probably functions indirectly by altering the affinity of the ribosome for aminoacyl-tRNA, thus increasing their reactivity as acceptors for peptidyl transferase. The sequence is that of Elongation factor P from Aromatoleum aromaticum (strain DSM 19018 / LMG 30748 / EbN1) (Azoarcus sp. (strain EbN1)).